Reading from the N-terminus, the 46-residue chain is Mu-segestritoxin-Sf1d (46 aa).

Disulfide bonds link Cys3-Cys19, Cys10-Cys22, Cys18-Cys42, and Cys24-Cys40. The keys region for toxin activity stretch occupies residues 31 to 33 (RPW).

This sequence belongs to the neurotoxin 16 (SFI) family. In terms of tissue distribution, expressed by the venom gland.

The protein localises to the secreted. Its function is as follows. Insecticidal toxin. It inhibits insect voltage-gated sodium channels (Nav) by partially blocking the channel pore in DUM neurons from the American cockroach, not by acting as a gating modifier. The inhibition is only partially reversible after prolonged washout. In vivo, the toxin causes flaccid paralysis followed by death when injected into Heliothis virescens larvae. It also causes uncoordinated movements followed by full paralysis to sheep blowflies (Lucilia cuprina). When the toxin is fused to snowdrop lectin, it is orally active against larvae of the tomato moth (Laconobia oleracea), the rice brown planthopper (Nilaparvata lugens), and the peach-potato aphid (Myzus persicae). This chain is Mu-segestritoxin-Sf1d, found in Segestria florentina (Tube-web spider).